The primary structure comprises 359 residues: WW domain-binding protein wbp-11 (359 aa).

Disordered regions lie at residues 1-38, 235-264, and 317-341; these read MPSI…DRQQ, PSSY…NPMG, and PGDN…QKQA. Residues 8–27 are compositionally biased toward basic and acidic residues; the sequence is KSGERYRAPTDQARKMDRKK. A compositionally biased stretch (basic residues) spans 245–256; the sequence is MPHHHHHHHPHA.

Activates pre-mRNA splicing. May inhibit PP1 phosphatase activity. In Caenorhabditis elegans, this protein is WW domain-binding protein wbp-11.